We begin with the raw amino-acid sequence, 410 residues long: Magnesium transporter NIPA3 (410 aa).

Over 1 to 67 (MGAQVRLPPG…ISANVENKYS (67 aa)) the chain is Extracellular. N-linked (GlcNAc...) asparagine glycosylation is found at N25, N35, and N50. A helical transmembrane segment spans residues 68 to 88 (LYVGLVLAVSSSIFIGSSFIL). Residues 89–114 (KKKGLLQLASKGITRAGQGGHSYLKE) are Cytoplasmic-facing. A helical transmembrane segment spans residues 115–135 (WLWWVGLLSMGVGEAANFAAY). A topological domain (extracellular) is located at residue A136. The chain crosses the membrane as a helical span at residues 137–157 (FAPATLVTPLGALSVLISAIL). The Cytoplasmic segment spans residues 158–165 (SSYFLNEH). A helical transmembrane segment spans residues 166–186 (LNIHGKIGCILSILGSTVMVI). Residues 187–207 (HAPQEEEVTSLHEMEMKLRDP) lie on the Extracellular side of the membrane. Residues 208 to 228 (GFISFAVIVTVISLVLILIVA) traverse the membrane as a helical segment. Over 229-233 (PKKGQ) the chain is Cytoplasmic. Residues 234–254 (TNILVYISICSLIGAFSVSSV) traverse the membrane as a helical segment. Topologically, residues 255–273 (KGLGIAIKELIEWKPVYKH) are extracellular. A helical membrane pass occupies residues 274-294 (PLVFVLLAVLVLSVTTQINYL). The Cytoplasmic segment spans residues 295-304 (NKALDTFNTS). The helical transmembrane segment at 305–325 (IVTPIYYVFFTSMVVTCSAIL) threads the bilayer. Residues 326–336 (FQEWYGMTAGD) lie on the Extracellular side of the membrane. A helical transmembrane segment spans residues 337-357 (IIGTLSGFFTIIIGIFLLHAF). Residues 358 to 410 (KNTDITWSELTSTAKKEAVSLNVSENNYVLLENLECSAPGYNDDVTLFSRTDD) are Cytoplasmic-facing.

This sequence belongs to the NIPA family.

The protein resides in the golgi apparatus membrane. The catalysed reaction is Mg(2+)(in) = Mg(2+)(out). Its function is as follows. Acts as a Mg(2+) transporter. Can also transport other divalent cations such as Fe(2+), Sr(2+), Ba(2+), Mn(2+), Cu(2+) and Co(2+) but to a much less extent than Mg(2+). The sequence is that of Magnesium transporter NIPA3 (NIPAL1) from Pongo abelii (Sumatran orangutan).